Here is a 305-residue protein sequence, read N- to C-terminus: tRNA dimethylallyltransferase (305 aa).

14–21 (GPTASGKS) lines the ATP pocket. 16-21 (TASGKS) is a substrate binding site. Residues 39 to 42 (DSMQ) are interaction with substrate tRNA.

The protein belongs to the IPP transferase family. Monomer. Mg(2+) is required as a cofactor.

It carries out the reaction adenosine(37) in tRNA + dimethylallyl diphosphate = N(6)-dimethylallyladenosine(37) in tRNA + diphosphate. In terms of biological role, catalyzes the transfer of a dimethylallyl group onto the adenine at position 37 in tRNAs that read codons beginning with uridine, leading to the formation of N6-(dimethylallyl)adenosine (i(6)A). This Bradyrhizobium sp. (strain BTAi1 / ATCC BAA-1182) protein is tRNA dimethylallyltransferase.